Consider the following 525-residue polypeptide: ATP synthase subunit alpha (525 aa).

169–176 (GDRQTGKT) lines the ATP pocket.

It belongs to the ATPase alpha/beta chains family. As to quaternary structure, F-type ATPases have 2 components, CF(1) - the catalytic core - and CF(0) - the membrane proton channel. CF(1) has five subunits: alpha(3), beta(3), gamma(1), delta(1), epsilon(1). CF(0) has three main subunits: a(1), b(2) and c(9-12). The alpha and beta chains form an alternating ring which encloses part of the gamma chain. CF(1) is attached to CF(0) by a central stalk formed by the gamma and epsilon chains, while a peripheral stalk is formed by the delta and b chains.

The protein localises to the cell membrane. It catalyses the reaction ATP + H2O + 4 H(+)(in) = ADP + phosphate + 5 H(+)(out). In terms of biological role, produces ATP from ADP in the presence of a proton gradient across the membrane. The alpha chain is a regulatory subunit. The protein is ATP synthase subunit alpha of Mesoplasma florum (strain ATCC 33453 / NBRC 100688 / NCTC 11704 / L1) (Acholeplasma florum).